Reading from the N-terminus, the 103-residue chain is Small ribosomal subunit protein cS23 (103 aa).

It belongs to the chloroplast-specific ribosomal protein cS23 family. As to quaternary structure, part of the 30S ribosomal subunit.

It localises to the plastid. The protein resides in the chloroplast. Its function is as follows. Probably a ribosomal protein or a ribosome-associated protein. In Euglena granulata, this protein is Small ribosomal subunit protein cS23 (ycf65).